We begin with the raw amino-acid sequence, 72 residues long: uncharacterized protein (72 aa).

This is an uncharacterized protein from Vertebrata (FPV).